The following is a 148-amino-acid chain: uncharacterized protein (148 aa).

Residues 1–22 (MVQTVLNSVWLWRSVLLRLTFS) form the signal peptide.

This is an uncharacterized protein from Saccharomyces cerevisiae (strain ATCC 204508 / S288c) (Baker's yeast).